The following is a 784-amino-acid chain: Probable phosphoketolase (784 aa).

The protein belongs to the XFP family. Requires thiamine diphosphate as cofactor.

The chain is Probable phosphoketolase from Rhodopseudomonas palustris (strain HaA2).